Reading from the N-terminus, the 822-residue chain is Serine/threonine-protein phosphatase 4 regulatory subunit 3 (822 aa).

In terms of domain architecture, WH1 spans 1–100 (MTDTRRRVKV…DEIWEKICQV (100 aa)). A disordered region spans residues 744–822 (TSQLSASGHP…PLTKKARLGS (79 aa)). The span at 761–774 (SPGSPESPGSVSKS) shows a compositional bias: low complexity. The span at 793–808 (YPDDDEEDDDNDEEEK) shows a compositional bias: acidic residues.

It belongs to the SMEK family. In terms of assembly, serine/threonine-protein phosphatase 4 (PP4) occurs in different assemblies of the catalytic and one or more regulatory subunits.

Regulatory subunit of serine/threonine-protein phosphatase 4. The polypeptide is Serine/threonine-protein phosphatase 4 regulatory subunit 3 (smek1) (Xenopus laevis (African clawed frog)).